Here is a 51-residue protein sequence, read N- to C-terminus: Methionine aminopeptidase (51 aa).

It belongs to the peptidase M24A family. Methionine aminopeptidase type 1 subfamily. As to quaternary structure, monomer. The cofactor is Co(2+). Zn(2+) serves as cofactor. It depends on Mn(2+) as a cofactor. Fe(2+) is required as a cofactor.

It carries out the reaction Release of N-terminal amino acids, preferentially methionine, from peptides and arylamides.. In terms of biological role, removes the N-terminal methionine from nascent proteins. The N-terminal methionine is often cleaved when the second residue in the primary sequence is small and uncharged (Met-Ala-, Cys, Gly, Pro, Ser, Thr, or Val). Requires deformylation of the N(alpha)-formylated initiator methionine before it can be hydrolyzed. This is Methionine aminopeptidase (map) from Geobacillus stearothermophilus (Bacillus stearothermophilus).